The primary structure comprises 193 residues: 3-isopropylmalate dehydratase small subunit (193 aa).

The protein belongs to the LeuD family. LeuD type 1 subfamily. As to quaternary structure, heterodimer of LeuC and LeuD.

It carries out the reaction (2R,3S)-3-isopropylmalate = (2S)-2-isopropylmalate. The protein operates within amino-acid biosynthesis; L-leucine biosynthesis; L-leucine from 3-methyl-2-oxobutanoate: step 2/4. Its function is as follows. Catalyzes the isomerization between 2-isopropylmalate and 3-isopropylmalate, via the formation of 2-isopropylmaleate. This Listeria monocytogenes serotype 4b (strain CLIP80459) protein is 3-isopropylmalate dehydratase small subunit.